We begin with the raw amino-acid sequence, 185 residues long: dTTP/UTP pyrophosphatase (185 aa).

The active-site Proton acceptor is the Asp-64.

It belongs to the Maf family. YhdE subfamily. Requires a divalent metal cation as cofactor.

It is found in the cytoplasm. The catalysed reaction is dTTP + H2O = dTMP + diphosphate + H(+). The enzyme catalyses UTP + H2O = UMP + diphosphate + H(+). Nucleoside triphosphate pyrophosphatase that hydrolyzes dTTP and UTP. May have a dual role in cell division arrest and in preventing the incorporation of modified nucleotides into cellular nucleic acids. In Thermococcus gammatolerans (strain DSM 15229 / JCM 11827 / EJ3), this protein is dTTP/UTP pyrophosphatase.